A 333-amino-acid chain; its full sequence is L-lactate dehydrogenase B chain (333 aa).

Residues 29 to 57 and Arg99 contribute to the NAD(+) site; that span reads GQVGMACAISILGKGLCDELALVDVWEDK. Substrate-binding residues include Arg106, Asn138, and Arg169. Asn138 serves as a coordination point for NAD(+). The Proton acceptor role is filled by His193. Thr248 serves as a coordination point for substrate.

This sequence belongs to the LDH/MDH superfamily. LDH family. As to quaternary structure, homotetramer.

The protein localises to the cytoplasm. It carries out the reaction (S)-lactate + NAD(+) = pyruvate + NADH + H(+). It functions in the pathway fermentation; pyruvate fermentation to lactate; (S)-lactate from pyruvate: step 1/1. Interconverts simultaneously and stereospecifically pyruvate and lactate with concomitant interconversion of NADH and NAD(+). This is L-lactate dehydrogenase B chain (LDHB) from Trachemys scripta elegans (Red-eared slider turtle).